We begin with the raw amino-acid sequence, 864 residues long: Calphotin (864 aa).

The tract at residues 816–858 is leucine-zipper; that stretch reads LQTTDVSLLAIAATLDAIGEKLKDQKARNQQVMDRLCEIEKIL.

In terms of assembly, homodimer. In terms of tissue distribution, soma and axons of photoreceptor cells of compound eyes and ocelli.

The protein resides in the cytoplasm. Plays important roles in both rhabdomere development and in photoreceptor cell survival. Might function as a calcium-sequestering 'sponge' to regulate the amount of free cytoplasmic calcium. It binds 0.3 mole of Ca(2+) per mole of protein. The chain is Calphotin (Cpn) from Drosophila melanogaster (Fruit fly).